Here is a 342-residue protein sequence, read N- to C-terminus: Dihydroorotase (342 aa).

2 residues coordinate Zn(2+): histidine 13 and histidine 15. Substrate contacts are provided by residues histidine 15–arginine 17 and asparagine 41. Zn(2+) is bound by residues lysine 98, histidine 135, and histidine 173. At lysine 98 the chain carries N6-carboxylysine. Residue histidine 135 participates in substrate binding. Leucine 218 provides a ligand contact to substrate. Aspartate 246 lines the Zn(2+) pocket. Aspartate 246 is a catalytic residue. Substrate contacts are provided by histidine 250 and alanine 262.

It belongs to the metallo-dependent hydrolases superfamily. DHOase family. Class II DHOase subfamily. As to quaternary structure, homodimer. Requires Zn(2+) as cofactor.

The catalysed reaction is (S)-dihydroorotate + H2O = N-carbamoyl-L-aspartate + H(+). The protein operates within pyrimidine metabolism; UMP biosynthesis via de novo pathway; (S)-dihydroorotate from bicarbonate: step 3/3. Catalyzes the reversible cyclization of carbamoyl aspartate to dihydroorotate. This Aliivibrio fischeri (strain ATCC 700601 / ES114) (Vibrio fischeri) protein is Dihydroorotase.